The primary structure comprises 346 residues: Thioredoxin domain-containing protein R362 (346 aa).

Residues 212 to 345 form the Thioredoxin domain; it reads LTNLSNTEAN…IVKFIDETMS (134 aa).

Its subcellular location is the virion. This chain is Thioredoxin domain-containing protein R362, found in Acanthamoeba polyphaga (Amoeba).